A 1163-amino-acid chain; its full sequence is Integrin alpha-X (1163 aa).

Positions 1-19 are cleaved as a signal peptide; that stretch reads MTRTRAALLLFTALATSLG. The Extracellular portion of the chain corresponds to 20 to 1107; sequence FNLDTEELTA…EKYKVHNPTP (1088 aa). FG-GAP repeat units follow at residues 23–78 and 79–138; these read DTEE…ACEP and IGLQ…TQRL. N-linked (GlcNAc...) asparagine glycosylation occurs at Asn-61. An intrachain disulfide couples Cys-69 to Cys-76. Asn-89 carries an N-linked (GlcNAc...) asparagine glycan. 2 disulfides stabilise this stretch: Cys-108/Cys-126 and Cys-116/Cys-145. Positions 157, 159, 161, and 259 each coordinate Mg(2+). The 175-residue stretch at 165 to 339 folds into the VWFA domain; sequence RNFATMMNFV…KEKIFAIEGT (175 aa). FG-GAP repeat units lie at residues 340 to 391, 392 to 443, 444 to 504, 507 to 565, and 570 to 630; these read ETTS…PTFI, NMSQ…SRQW, RMKA…WRRW, DAVL…PSIS, and QRIA…FIPA. A glycan (N-linked (GlcNAc...) asparagine) is linked at Asn-392. Ca(2+) is bound by residues Asp-466, Asp-468, Asp-470, and Asp-474. Cys-495 and Cys-506 are oxidised to a cystine. Ca(2+) contacts are provided by Asp-530, Asn-532, Asp-534, Asp-538, Asp-593, Asp-597, and Asp-601. 2 disulfides stabilise this stretch: Cys-639–Cys-722 and Cys-655–Cys-712. Asn-697 and Asn-735 each carry an N-linked (GlcNAc...) asparagine glycan. Disulfide bonds link Cys-771/Cys-777 and Cys-848/Cys-863. 2 N-linked (GlcNAc...) asparagine glycosylation sites follow: Asn-899 and Asn-939. Intrachain disulfides connect Cys-998–Cys-1022 and Cys-1027–Cys-1032. Asn-1050 carries an N-linked (GlcNAc...) asparagine glycan. The helical transmembrane segment at 1108–1128 threads the bilayer; the sequence is LIVGSSIGGLLLLALITAVLY. Residues 1129-1163 are Cytoplasmic-facing; it reads KVGFFKRQYKEMMEEANGQIAPENGTQTPSPPSEK. The GFFKR motif motif lies at 1131 to 1135; the sequence is GFFKR.

Belongs to the integrin alpha chain family. In terms of assembly, heterodimer of an alpha and a beta subunit. Alpha-X associates with beta-2. Predominantly expressed in monocytes and granulocytes.

It localises to the membrane. In terms of biological role, integrin alpha-X/beta-2 is a receptor for fibrinogen. It recognizes the sequence G-P-R in fibrinogen. It mediates cell-cell interaction during inflammatory responses. It is especially important in monocyte adhesion and chemotaxis. The polypeptide is Integrin alpha-X (ITGAX) (Homo sapiens (Human)).